Consider the following 57-residue polypeptide: Small hydrophobic protein (57 aa).

At 1–8 the chain is on the virion surface side; that stretch reads MPLIQPPL. The chain crosses the membrane as a helical span at residues 9-29; sequence YLTFLLLMLLYRIITLYVWSL. At 30–57 the chain is on the intravirion side; that stretch reads STITYKTSVRHASLYQRSFFRWSVDHSL.

It belongs to the rubulavirus small hydrophobic protein family. Interacts with host TNFRSF1A, RIPK1 and IRAK1; these interactions interfere with host NF-kappa-B activation at the level of receptor complexes. Interacts with host protein UBQLN4.

Its subcellular location is the virion membrane. The protein resides in the host cell membrane. Its function is as follows. Plays a role in the inhibition of the host NF-kappa-B pathway. This inhibition occurs at the receptor level, by preventing the signaling of TNFR1 as well as IL-1R and TLR3. This chain is Small hydrophobic protein (SH), found in Homo sapiens (Human).